A 246-amino-acid chain; its full sequence is Small ribosomal subunit protein uS2 (246 aa).

This sequence belongs to the universal ribosomal protein uS2 family.

In Chromohalobacter salexigens (strain ATCC BAA-138 / DSM 3043 / CIP 106854 / NCIMB 13768 / 1H11), this protein is Small ribosomal subunit protein uS2.